The sequence spans 99 residues: Acylphosphatase (99 aa).

The Acylphosphatase-like domain maps to 5–97 (IRQVMISGRV…QPGERFSILS (93 aa)). Active-site residues include Arg-20 and Asn-38.

This sequence belongs to the acylphosphatase family.

It catalyses the reaction an acyl phosphate + H2O = a carboxylate + phosphate + H(+). The sequence is that of Acylphosphatase (acyP) from Rhodopseudomonas palustris (strain ATCC BAA-98 / CGA009).